A 126-amino-acid polypeptide reads, in one-letter code: Large-conductance mechanosensitive channel (126 aa).

Transmembrane regions (helical) follow at residues 14–34 (VIDL…VKSL) and 67–87 (GSFL…FILV).

It belongs to the MscL family. In terms of assembly, homopentamer.

The protein localises to the cell membrane. Functionally, channel that opens in response to stretch forces in the membrane lipid bilayer. May participate in the regulation of osmotic pressure changes within the cell. The protein is Large-conductance mechanosensitive channel of Lactiplantibacillus plantarum (strain ATCC BAA-793 / NCIMB 8826 / WCFS1) (Lactobacillus plantarum).